Here is a 98-residue protein sequence, read N- to C-terminus: Integration host factor subunit alpha (98 aa).

The segment at 49 to 70 is disordered; the sequence is FGNFDLRDKNQRPGRNPKTGED.

Belongs to the bacterial histone-like protein family. As to quaternary structure, heterodimer of an alpha and a beta chain.

In terms of biological role, this protein is one of the two subunits of integration host factor, a specific DNA-binding protein that functions in genetic recombination as well as in transcriptional and translational control. The polypeptide is Integration host factor subunit alpha (Yersinia pestis).